Consider the following 125-residue polypeptide: Small ribosomal subunit protein uS12m (125 aa).

Disordered stretches follow at residues 1 to 50 and 106 to 125; these read MPTL…SAPR and GIPN…PKSI. The span at 10-23 shows a compositional bias: basic and acidic residues; it reads HGREEKRRTDRTRA.

The protein belongs to the universal ribosomal protein uS12 family.

Its subcellular location is the mitochondrion. Functionally, protein S12 is involved in the translation initiation step. This Magnolia soulangeana (Saucer magnolia) protein is Small ribosomal subunit protein uS12m (RPS12).